Consider the following 616-residue polypeptide: Dihydroxy-acid dehydratase (616 aa).

Residue aspartate 81 participates in Mg(2+) binding. Residue cysteine 122 coordinates [2Fe-2S] cluster. Positions 123 and 124 each coordinate Mg(2+). Lysine 124 carries the N6-carboxylysine modification. Cysteine 195 contacts [2Fe-2S] cluster. Glutamate 491 is a binding site for Mg(2+). Serine 517 serves as the catalytic Proton acceptor.

This sequence belongs to the IlvD/Edd family. Homodimer. The cofactor is [2Fe-2S] cluster. Mg(2+) is required as a cofactor.

It carries out the reaction (2R)-2,3-dihydroxy-3-methylbutanoate = 3-methyl-2-oxobutanoate + H2O. The enzyme catalyses (2R,3R)-2,3-dihydroxy-3-methylpentanoate = (S)-3-methyl-2-oxopentanoate + H2O. It functions in the pathway amino-acid biosynthesis; L-isoleucine biosynthesis; L-isoleucine from 2-oxobutanoate: step 3/4. It participates in amino-acid biosynthesis; L-valine biosynthesis; L-valine from pyruvate: step 3/4. Functionally, functions in the biosynthesis of branched-chain amino acids. Catalyzes the dehydration of (2R,3R)-2,3-dihydroxy-3-methylpentanoate (2,3-dihydroxy-3-methylvalerate) into 2-oxo-3-methylpentanoate (2-oxo-3-methylvalerate) and of (2R)-2,3-dihydroxy-3-methylbutanoate (2,3-dihydroxyisovalerate) into 2-oxo-3-methylbutanoate (2-oxoisovalerate), the penultimate precursor to L-isoleucine and L-valine, respectively. This chain is Dihydroxy-acid dehydratase, found in Yersinia pseudotuberculosis serotype O:1b (strain IP 31758).